We begin with the raw amino-acid sequence, 873 residues long: Probable beta-glucosidase A (873 aa).

The first 19 residues, 1 to 19 (MRFGWLEVAALTAASVANA), serve as a signal peptide directing secretion. Asparagine 71, asparagine 222, and asparagine 263 each carry an N-linked (GlcNAc...) asparagine glycan. Aspartate 291 is a catalytic residue. Asparagine 326, asparagine 333, asparagine 365, asparagine 453, asparagine 534, asparagine 553, asparagine 575, asparagine 679, and asparagine 725 each carry an N-linked (GlcNAc...) asparagine glycan. Positions 730–765 (EDSSDDPNYGWEDSEYIPEGARDGSPQPLLKAGGAP) are disordered.

It belongs to the glycosyl hydrolase 3 family.

Its subcellular location is the secreted. It carries out the reaction Hydrolysis of terminal, non-reducing beta-D-glucosyl residues with release of beta-D-glucose.. It functions in the pathway glycan metabolism; cellulose degradation. Functionally, beta-glucosidases are one of a number of cellulolytic enzymes involved in the degradation of cellulosic biomass. Catalyzes the last step releasing glucose from the inhibitory cellobiose. The chain is Probable beta-glucosidase A (bglA) from Neosartorya fischeri (strain ATCC 1020 / DSM 3700 / CBS 544.65 / FGSC A1164 / JCM 1740 / NRRL 181 / WB 181) (Aspergillus fischerianus).